The following is a 189-amino-acid chain: Segregation and condensation protein B (189 aa).

The protein belongs to the ScpB family. Homodimer. Homodimerization may be required to stabilize the binding of ScpA to the Smc head domains. Component of a cohesin-like complex composed of ScpA, ScpB and the Smc homodimer, in which ScpA and ScpB bind to the head domain of Smc. The presence of the three proteins is required for the association of the complex with DNA.

It is found in the cytoplasm. Its function is as follows. Participates in chromosomal partition during cell division. May act via the formation of a condensin-like complex containing Smc and ScpA that pull DNA away from mid-cell into both cell halves. The chain is Segregation and condensation protein B from Streptococcus pneumoniae serotype 19F (strain G54).